The chain runs to 262 residues: Ferric siderophore reductase (262 aa).

[2Fe-2S] cluster-binding residues include cysteine 244, cysteine 245, cysteine 256, and cysteine 259.

As to quaternary structure, monomer. [2Fe-2S] cluster serves as cofactor.

It localises to the cytoplasm. The protein localises to the cell inner membrane. With respect to regulation, displays pH dependent redox properties. SufD is necessary for the stability of FhuF. Siderophore-iron reductase which is involved in iron removal from the hydroxamate-type siderophores coprogen, ferrichrome and ferrioxamine B after their transport into the cell. Binds both the iron-loaded and the apo forms of ferrichrome. This chain is Ferric siderophore reductase (fhuF), found in Escherichia coli (strain K12).